Reading from the N-terminus, the 446-residue chain is COBRA-like protein 1 (446 aa).

Residues 1 to 28 (MALLLLRMGVSVALLVAFFSSLIPSSEA) form the signal peptide. N-linked (GlcNAc...) asparagine glycosylation is found at Asn37, Asn162, Asn170, Asn209, Asn234, Asn316, Asn331, Asn350, and Asn419. The GPI-anchor amidated alanine moiety is linked to residue Ala420. Positions 421-446 (STRVMSSILLPFITIWTALTFLMVYA) are cleaved as a propeptide — removed in mature form.

Belongs to the COBRA family.

It is found in the cell membrane. Involved in determining the orientation of cell expansion, probably by playing an important role in cellulose deposition. May act by recruiting cellulose synthesizing complexes to discrete positions on the cell surface. The polypeptide is COBRA-like protein 1 (BC1L6) (Oryza sativa subsp. japonica (Rice)).